A 299-amino-acid chain; its full sequence is uncharacterized protein (299 aa).

This is an uncharacterized protein from Bacillus subtilis (strain 168).